Here is a 390-residue protein sequence, read N- to C-terminus: MRALNDSYDVVVVGAGPAGSMASYNASKNGAKTLLIEKSQEIGTPVRCAEAVPRIEEFGINPDPSFIKSYIKGGYLIAPNGKKVVVKGGKTDGYVVERKVFDKYLAIRSGQAGTQIAVKSRVTGIEKTDDGYNVFVNYLGDEYVVKSKIVIAADGVESNIAEYAGLKSKKNPKEICSCAEYEMTNVQLLDNEMMEFYFGDICPKGYIWLFPKGDTVNVGIGVIDSKKRAIDYLDEFLSNPLVEGRLDNAVPVEFKVGGDPVGGPIEKTVDDNIIVVGDAAGHVSPLTGGGIGLSMDCGLMAGEVAAQSIKAENYSEEFLSLYEKRWKEKYYKPLMKDLKYKNILQKLSDDELNAIADSIPENLEEVDVGKLAVKIVAKAPSLLRYFKELL.

FAD-binding residues include Ala18, Glu37, Cys48, Ala49, Ala51, Arg98, Val122, Asp278, Gly290, and Ile291. Val368 is a binding site for a 2,3-bis-O-(geranylgeranyl)-sn-glycerol 1-phospholipid.

Belongs to the geranylgeranyl reductase family. DGGGPL reductase subfamily. FAD serves as cofactor.

The enzyme catalyses a 2,3-bis-O-phytanyl-sn-glycerol 1-phospholipid + 8 A = a 2,3-bis-O-(geranylgeranyl)-sn-glycerol 1-phospholipid + 8 AH2. It carries out the reaction 2,3-bis-O-(phytanyl)-sn-glycerol 1-phosphate + 8 A = 2,3-bis-O-(geranylgeranyl)-sn-glycerol 1-phosphate + 8 AH2. The catalysed reaction is CDP-2,3-bis-O-(geranylgeranyl)-sn-glycerol + 8 AH2 = CDP-2,3-bis-O-(phytanyl)-sn-glycerol + 8 A. It catalyses the reaction archaetidylserine + 8 AH2 = 2,3-bis-O-phytanyl-sn-glycero-3-phospho-L-serine + 8 A. The protein operates within membrane lipid metabolism; glycerophospholipid metabolism. In terms of biological role, is involved in the reduction of 2,3-digeranylgeranylglycerophospholipids (unsaturated archaeols) into 2,3-diphytanylglycerophospholipids (saturated archaeols) in the biosynthesis of archaeal membrane lipids. Catalyzes the formation of archaetidic acid (2,3-di-O-phytanyl-sn-glyceryl phosphate) from 2,3-di-O-geranylgeranylglyceryl phosphate (DGGGP) via the hydrogenation of each double bond of the isoprenoid chains. Is also probably able to reduce double bonds of geranyl groups in CDP-2,3-bis-O-(geranylgeranyl)-sn-glycerol and archaetidylserine, thus acting at various stages in the biosynthesis of archaeal membrane lipids. In Methanococcus maripaludis (strain C7 / ATCC BAA-1331), this protein is Digeranylgeranylglycerophospholipid reductase.